A 432-amino-acid chain; its full sequence is Glutamate-1-semialdehyde 2,1-aminomutase 2 (432 aa).

Lysine 268 is subject to N6-(pyridoxal phosphate)lysine.

Belongs to the class-III pyridoxal-phosphate-dependent aminotransferase family. HemL subfamily. Homodimer. The cofactor is pyridoxal 5'-phosphate.

Its subcellular location is the cytoplasm. It catalyses the reaction (S)-4-amino-5-oxopentanoate = 5-aminolevulinate. Its pathway is porphyrin-containing compound metabolism; protoporphyrin-IX biosynthesis; 5-aminolevulinate from L-glutamyl-tRNA(Glu): step 2/2. This is Glutamate-1-semialdehyde 2,1-aminomutase 2 from Listeria monocytogenes serovar 1/2a (strain ATCC BAA-679 / EGD-e).